The primary structure comprises 358 residues: DNA replication and repair protein RecF (358 aa).

30–37 contacts ATP; that stretch reads GNNGSGKT.

This sequence belongs to the RecF family.

Its subcellular location is the cytoplasm. In terms of biological role, the RecF protein is involved in DNA metabolism; it is required for DNA replication and normal SOS inducibility. RecF binds preferentially to single-stranded, linear DNA. It also seems to bind ATP. In Actinobacillus succinogenes (strain ATCC 55618 / DSM 22257 / CCUG 43843 / 130Z), this protein is DNA replication and repair protein RecF.